A 185-amino-acid chain; its full sequence is Ribosome-recycling factor (185 aa).

Belongs to the RRF family.

Its subcellular location is the cytoplasm. Its function is as follows. Responsible for the release of ribosomes from messenger RNA at the termination of protein biosynthesis. May increase the efficiency of translation by recycling ribosomes from one round of translation to another. The protein is Ribosome-recycling factor of Streptococcus gordonii (strain Challis / ATCC 35105 / BCRC 15272 / CH1 / DL1 / V288).